A 389-amino-acid polypeptide reads, in one-letter code: Chitin-binding protein CbpD (389 aa).

Residues 1–25 (MKHYSATLALLPLTLALFLPQAAHA) form the signal peptide. The Chitin-binding type-4 domain maps to 26-208 (HGSMETPPSR…EAFYACIDVS (183 aa)). Tyr37 bears the Phosphotyrosine mark. The residue at position 210 (Ser210) is a Phosphoserine.

It is found in the secreted. In terms of biological role, binds but does not hydrolyze chitin. This is Chitin-binding protein CbpD (cpbD) from Pseudomonas aeruginosa (strain UCBPP-PA14).